We begin with the raw amino-acid sequence, 545 residues long: Chaperonin GroEL (545 aa).

Residues threonine 29–proline 32, lysine 50, aspartate 86–threonine 90, glycine 414, asparagine 480–alanine 482, and aspartate 496 each bind ATP.

The protein belongs to the chaperonin (HSP60) family. In terms of assembly, forms a cylinder of 14 subunits composed of two heptameric rings stacked back-to-back. Interacts with the co-chaperonin GroES.

The protein localises to the cytoplasm. The catalysed reaction is ATP + H2O + a folded polypeptide = ADP + phosphate + an unfolded polypeptide.. Together with its co-chaperonin GroES, plays an essential role in assisting protein folding. The GroEL-GroES system forms a nano-cage that allows encapsulation of the non-native substrate proteins and provides a physical environment optimized to promote and accelerate protein folding. The chain is Chaperonin GroEL from Malacoplasma penetrans (strain HF-2) (Mycoplasma penetrans).